Here is a 138-residue protein sequence, read N- to C-terminus: Glutathione S-transferase Mu 5 (138 aa).

The residue at position 1 (Ser-1) is a Phosphoserine. A GST N-terminal domain is found at Ser-1 to Arg-71. Glutathione is bound by residues Tyr-6 to Trp-7, Trp-39 to Lys-43, Asn-52 to Leu-53, and Gln-65 to Ser-66. Residues Ile-72–Ile-135 enclose the GST C-terminal domain.

Belongs to the GST superfamily. Mu family. Homodimer.

Its subcellular location is the cytoplasm. The catalysed reaction is RX + glutathione = an S-substituted glutathione + a halide anion + H(+). In terms of biological role, conjugation of reduced glutathione to a wide number of exogenous and endogenous hydrophobic electrophiles. This chain is Glutathione S-transferase Mu 5, found in Mesocricetus auratus (Golden hamster).